We begin with the raw amino-acid sequence, 214 residues long: Ribonuclease HII (214 aa).

An RNase H type-2 domain is found at 26–214 (EIVCGVDEAG…PVRAALDLIR (189 aa)). A divalent metal cation contacts are provided by aspartate 32, glutamate 33, and aspartate 124.

The protein belongs to the RNase HII family. Requires Mn(2+) as cofactor. Mg(2+) serves as cofactor.

Its subcellular location is the cytoplasm. It carries out the reaction Endonucleolytic cleavage to 5'-phosphomonoester.. Its function is as follows. Endonuclease that specifically degrades the RNA of RNA-DNA hybrids. This chain is Ribonuclease HII, found in Burkholderia orbicola (strain MC0-3).